Reading from the N-terminus, the 160-residue chain is Probable cyclic pyranopterin monophosphate synthase (160 aa).

Residues 1–12 show a composition bias toward basic and acidic residues; it reads MSDDSELTHVTD. Residues 1 to 24 are disordered; sequence MSDDSELTHVTDDGDAQMVDVGEK. Residues 78–80 and 114–115 contribute to the substrate site; these read MCH and ME. The active site involves D129.

It belongs to the MoaC family. In terms of assembly, homohexamer; trimer of dimers.

The enzyme catalyses (8S)-3',8-cyclo-7,8-dihydroguanosine 5'-triphosphate = cyclic pyranopterin phosphate + diphosphate. It functions in the pathway cofactor biosynthesis; molybdopterin biosynthesis. Catalyzes the conversion of (8S)-3',8-cyclo-7,8-dihydroguanosine 5'-triphosphate to cyclic pyranopterin monophosphate (cPMP). In Natronomonas pharaonis (strain ATCC 35678 / DSM 2160 / CIP 103997 / JCM 8858 / NBRC 14720 / NCIMB 2260 / Gabara) (Halobacterium pharaonis), this protein is Probable cyclic pyranopterin monophosphate synthase.